We begin with the raw amino-acid sequence, 237 residues long: Purine nucleoside phosphorylase DeoD-type (237 aa).

Histidine 4 contributes to the a purine D-ribonucleoside binding site. Phosphate-binding positions include glycine 20, arginine 24, arginine 43, and 87–90 (RVGS). A purine D-ribonucleoside contacts are provided by residues 179–181 (EME) and 203–204 (SD). Aspartate 204 serves as the catalytic Proton donor.

This sequence belongs to the PNP/UDP phosphorylase family. As to quaternary structure, homohexamer; trimer of homodimers.

The enzyme catalyses a purine D-ribonucleoside + phosphate = a purine nucleobase + alpha-D-ribose 1-phosphate. The catalysed reaction is a purine 2'-deoxy-D-ribonucleoside + phosphate = a purine nucleobase + 2-deoxy-alpha-D-ribose 1-phosphate. Catalyzes the reversible phosphorolytic breakdown of the N-glycosidic bond in the beta-(deoxy)ribonucleoside molecules, with the formation of the corresponding free purine bases and pentose-1-phosphate. In Dichelobacter nodosus (strain VCS1703A), this protein is Purine nucleoside phosphorylase DeoD-type.